The following is a 407-amino-acid chain: 5-aminolevulinate synthase 1 (407 aa).

Substrate-binding residues include Arg-21, Ser-137, and Lys-156. Ser-189, His-217, and Thr-245 together coordinate pyridoxal 5'-phosphate. Residue Lys-248 is part of the active site. Lys-248 bears the N6-(pyridoxal phosphate)lysine mark. Residues Ser-277 and Thr-278 each contribute to the pyridoxal 5'-phosphate site. Thr-363 contributes to the substrate binding site.

It belongs to the class-II pyridoxal-phosphate-dependent aminotransferase family. As to quaternary structure, homodimer. The cofactor is pyridoxal 5'-phosphate.

The catalysed reaction is succinyl-CoA + glycine + H(+) = 5-aminolevulinate + CO2 + CoA. The protein operates within porphyrin-containing compound metabolism; protoporphyrin-IX biosynthesis; 5-aminolevulinate from glycine: step 1/1. The polypeptide is 5-aminolevulinate synthase 1 (hemA) (Cereibacter sphaeroides (strain ATCC 17023 / DSM 158 / JCM 6121 / CCUG 31486 / LMG 2827 / NBRC 12203 / NCIMB 8253 / ATH 2.4.1.) (Rhodobacter sphaeroides)).